A 419-amino-acid polypeptide reads, in one-letter code: L-rhamnose isomerase (419 aa).

Residues histidine 262, aspartate 294, and aspartate 296 each contribute to the Mn(2+) site.

Belongs to the rhamnose isomerase family. Homotetramer. It depends on Mn(2+) as a cofactor.

It localises to the cytoplasm. It carries out the reaction L-rhamnopyranose = L-rhamnulose. The protein operates within carbohydrate degradation; L-rhamnose degradation; glycerone phosphate from L-rhamnose: step 1/3. Its function is as follows. Catalyzes the interconversion of L-rhamnose and L-rhamnulose. This chain is L-rhamnose isomerase, found in Citrobacter koseri (strain ATCC BAA-895 / CDC 4225-83 / SGSC4696).